Consider the following 435-residue polypeptide: Gap junction alpha-3 protein (435 aa).

The stretch at 2–15 (GDWSFLGRLLENAQ) is an intramembrane region. The Cytoplasmic segment spans residues 16 to 19 (EHST). The chain crosses the membrane as a helical span at residues 20-40 (VIGKVWLTVLFIFRILVLGAA). Residues 41 to 71 (AEDVWGDEQSDFTCNTQQPGCENVCYDRAFP) are Extracellular-facing. Disulfide bonds link Cys54/Cys192, Cys61/Cys186, and Cys65/Cys181. Residues 72–92 (ISHIRFWALQIIFVSTPTLIY) traverse the membrane as a helical segment. Residues 93–152 (LGHVLHIVRMEEKKKEREEEEQLKRESPSPKEPPQDNPSSRDDRGRVRMAGALLRTYVFN) lie on the Cytoplasmic side of the membrane. Residues 108–121 (EREEEEQLKRESPS) show a composition bias toward basic and acidic residues. The segment at 108–136 (EREEEEQLKRESPSPKEPPQDNPSSRDDR) is disordered. Residues 153–173 (IIFKTLFEVGFIAGQYFLYGF) traverse the membrane as a helical segment. Over 174–201 (ELKPLYRCDRWPCPNTVDCFISRPTEKT) the chain is Extracellular. Residues 202 to 222 (IFIIFMLAVACASLLLNMLEI) traverse the membrane as a helical segment. Over 223–435 (YHLGWKKLKQ…GRARPEDLAI (213 aa)) the chain is Cytoplasmic. The tract at residues 332–435 (AAERQPPALK…GRARPEDLAI (104 aa)) is disordered. 2 stretches are compositionally biased toward low complexity: residues 342–389 (AYPA…ALAG) and 415–427 (GRAS…SSGR).

This sequence belongs to the connexin family. Alpha-type (group II) subfamily. A hemichannel or connexon is composed of a hexamer of connexins. A functional gap junction is formed by the apposition of two hemichannels. Forms heteromeric channels with GJA8.

Its subcellular location is the cell membrane. The protein resides in the cell junction. The protein localises to the gap junction. Structural component of lens fiber gap junctions. Gap junctions are dodecameric channels that connect the cytoplasm of adjoining cells. They are formed by the docking of two hexameric hemichannels, one from each cell membrane. Small molecules and ions diffuse from one cell to a neighboring cell via the central pore. This Homo sapiens (Human) protein is Gap junction alpha-3 protein (GJA3).